The following is a 255-amino-acid chain: uncharacterized protein (255 aa).

Positions 122 and 160 each coordinate [4Fe-4S] cluster.

In terms of assembly, homodimer. It depends on [4Fe-4S] cluster as a cofactor.

This is an uncharacterized protein from Escherichia coli (strain K12).